The primary structure comprises 190 residues: Probable gluconokinase (190 aa).

7–14 (GVSGSGKT) is a binding site for ATP.

Belongs to the gluconokinase GntK/GntV family.

It catalyses the reaction D-gluconate + ATP = 6-phospho-D-gluconate + ADP + H(+). It participates in carbohydrate acid metabolism; D-gluconate degradation. The sequence is that of Probable gluconokinase (idnk) from Xenopus tropicalis (Western clawed frog).